A 1391-amino-acid polypeptide reads, in one-letter code: Nuclear pore complex protein Nup155 (1391 aa).

The O-linked (GlcNAc) serine glycan is linked to Ser526. Disordered regions lie at residues 604-630 and 985-1012; these read SSSP…AQPP and QSKA…NMLS. Ser1057 bears the Phosphoserine mark.

The protein belongs to the non-repetitive/WGA-negative nucleoporin family. As to quaternary structure, interacts with GLE1 and NUP35/NUP53. Able to form a heterotrimer with GLE1 and NUP42 in vitro. Forms a complex with NUP35, NUP93, NUP205 and lamin B. In terms of processing, phosphorylated. Phosphorylation and dephosphorylation may be important for the function of NUP155 and may play a role in the reversible disassembly of the nuclear pore complex during mitosis. Post-translationally, disulfide-linked to NUP62. The inner channel of the NPC has a different redox environment from the cytoplasm and allows the formation of interchain disulfide bonds between some nucleoporins, the significant increase of these linkages upon oxidative stress reduces the permeability of the NPC.

The protein resides in the nucleus. It is found in the nuclear pore complex. It localises to the nucleus membrane. In terms of biological role, essential component of nuclear pore complex. Could be essessential for embryogenesis. Nucleoporins may be involved both in binding and translocating proteins during nucleocytoplasmic transport. The protein is Nuclear pore complex protein Nup155 (Nup155) of Mus musculus (Mouse).